A 268-amino-acid polypeptide reads, in one-letter code: Small ribosomal subunit protein uS10m (268 aa).

The N-terminal 64 residues, 1-64 (MIIRPVVRSL…RITTTTEAPK (64 aa)), are a transit peptide targeting the mitochondrion.

This sequence belongs to the universal ribosomal protein uS10 family. Component of the mitochondrial small ribosomal subunit (mt-SSU). Mature N.crassa 74S mitochondrial ribosomes consist of a small (37S) and a large (54S) subunit. The 37S small subunit contains a 16S ribosomal RNA (16S mt-rRNA) and 32 different proteins. The 54S large subunit contains a 23S rRNA (23S mt-rRNA) and 42 different proteins.

The protein resides in the mitochondrion. Its function is as follows. Component of the mitochondrial ribosome (mitoribosome), a dedicated translation machinery responsible for the synthesis of mitochondrial genome-encoded proteins, including at least some of the essential transmembrane subunits of the mitochondrial respiratory chain. The mitoribosomes are attached to the mitochondrial inner membrane and translation products are cotranslationally integrated into the membrane. This is Small ribosomal subunit protein uS10m (mrp-10) from Neurospora crassa (strain ATCC 24698 / 74-OR23-1A / CBS 708.71 / DSM 1257 / FGSC 987).